The sequence spans 57 residues: Granulin-3 (57 aa).

2 disulfide bridges follow: C4–C16 and C10–C26.

This sequence belongs to the granulin family. In terms of processing, granulins are disulfide bridged. Ubiquitous.

Its subcellular location is the secreted. Functionally, granulins have possible cytokine-like activity. They may play a role in inflammation, wound repair, and tissue remodeling. This chain is Granulin-3, found in Cyprinus carpio (Common carp).